We begin with the raw amino-acid sequence, 689 residues long: Elongation factor G (689 aa).

Positions 8 to 282 (ERTRNIGIMA…AVVDYLPAPT (275 aa)) constitute a tr-type G domain. GTP-binding positions include 17 to 24 (AHIDAGKT), 81 to 85 (DTPGH), and 135 to 138 (NKMD).

It belongs to the TRAFAC class translation factor GTPase superfamily. Classic translation factor GTPase family. EF-G/EF-2 subfamily.

Its subcellular location is the cytoplasm. Catalyzes the GTP-dependent ribosomal translocation step during translation elongation. During this step, the ribosome changes from the pre-translocational (PRE) to the post-translocational (POST) state as the newly formed A-site-bound peptidyl-tRNA and P-site-bound deacylated tRNA move to the P and E sites, respectively. Catalyzes the coordinated movement of the two tRNA molecules, the mRNA and conformational changes in the ribosome. The polypeptide is Elongation factor G (Desulforudis audaxviator (strain MP104C)).